Here is a 275-residue protein sequence, read N- to C-terminus: NH(3)-dependent NAD(+) synthetase (275 aa).

Position 50–57 (50–57) interacts with ATP; that stretch reads GISGGVDS. Aspartate 56 serves as a coordination point for Mg(2+). Arginine 147 is a binding site for deamido-NAD(+). Position 167 (threonine 167) interacts with ATP. Glutamate 172 serves as a coordination point for Mg(2+). 2 residues coordinate deamido-NAD(+): lysine 180 and aspartate 187. 2 residues coordinate ATP: lysine 196 and threonine 218. 267 to 268 contributes to the deamido-NAD(+) binding site; that stretch reads HK.

The protein belongs to the NAD synthetase family. Homodimer.

It catalyses the reaction deamido-NAD(+) + NH4(+) + ATP = AMP + diphosphate + NAD(+) + H(+). Its pathway is cofactor biosynthesis; NAD(+) biosynthesis; NAD(+) from deamido-NAD(+) (ammonia route): step 1/1. Catalyzes the ATP-dependent amidation of deamido-NAD to form NAD. Uses ammonia as a nitrogen source. The polypeptide is NH(3)-dependent NAD(+) synthetase (Pseudomonas fluorescens (strain Pf0-1)).